The sequence spans 221 residues: Transcription factor bHLH126 (221 aa).

Disordered regions lie at residues M1–L46 and R104–S132. The bHLH domain maps to K42–T94.

Homodimer.

Its subcellular location is the nucleus. The chain is Transcription factor bHLH126 (BHLH126) from Arabidopsis thaliana (Mouse-ear cress).